Reading from the N-terminus, the 294-residue chain is 4-hydroxy-tetrahydrodipicolinate synthase (294 aa).

Residue threonine 48 participates in pyruvate binding. Catalysis depends on tyrosine 136, which acts as the Proton donor/acceptor. Lysine 164 acts as the Schiff-base intermediate with substrate in catalysis. Valine 206 lines the pyruvate pocket.

The protein belongs to the DapA family. Homotetramer; dimer of dimers.

The protein resides in the cytoplasm. It catalyses the reaction L-aspartate 4-semialdehyde + pyruvate = (2S,4S)-4-hydroxy-2,3,4,5-tetrahydrodipicolinate + H2O + H(+). It participates in amino-acid biosynthesis; L-lysine biosynthesis via DAP pathway; (S)-tetrahydrodipicolinate from L-aspartate: step 3/4. In terms of biological role, catalyzes the condensation of (S)-aspartate-beta-semialdehyde [(S)-ASA] and pyruvate to 4-hydroxy-tetrahydrodipicolinate (HTPA). In Desulforudis audaxviator (strain MP104C), this protein is 4-hydroxy-tetrahydrodipicolinate synthase.